Reading from the N-terminus, the 440-residue chain is MDYELLKRLDPEVFEAIANETRRQTETLELIASENFTSTAVMEACGSVMTNKYAEGYPGKRYYGGCEFVDVAENLARDRAKKLFGCEYVNVQPHSGSSANMAVLFAVLKPGDSIMGLDLSHGGHLTHGSKVNFSGQFFDAHSYGVDKETGIIDMNAVEEMALKVKPKLIITGASAYSQGFDFKAFREIADKVGAFLMADIAHPAGLVAAGLSANPVPHCHFVTTTTHKTLRGPRGGMIMMGKDFENPMGITVNTKNGPRVKMMSEVIDAEVMPGIQGGPLMHIIAGKAVAFGEALQPEFKAYAQQIKDNAAAMAAKFLAADYHIVSGGTKNHLMLLDLRNKNVNGKVAENLLHDAGITVNKNMVPFDDKSPFVTSGIRVGTPAMTTRGMKVAEAEKIVEFIDRVISAANDDNVADVCKQVRAEVRELCLQFPLNGYGLQV.

(6S)-5,6,7,8-tetrahydrofolate is bound by residues Leu-119 and 123–125 (GHL). Lys-228 bears the N6-(pyridoxal phosphate)lysine mark. 370–372 (SPF) serves as a coordination point for (6S)-5,6,7,8-tetrahydrofolate.

This sequence belongs to the SHMT family. Homodimer. Pyridoxal 5'-phosphate serves as cofactor.

Its subcellular location is the cytoplasm. It carries out the reaction (6R)-5,10-methylene-5,6,7,8-tetrahydrofolate + glycine + H2O = (6S)-5,6,7,8-tetrahydrofolate + L-serine. Its pathway is one-carbon metabolism; tetrahydrofolate interconversion. It participates in amino-acid biosynthesis; glycine biosynthesis; glycine from L-serine: step 1/1. Its function is as follows. Catalyzes the reversible interconversion of serine and glycine with tetrahydrofolate (THF) serving as the one-carbon carrier. This reaction serves as the major source of one-carbon groups required for the biosynthesis of purines, thymidylate, methionine, and other important biomolecules. Also exhibits THF-independent aldolase activity toward beta-hydroxyamino acids, producing glycine and aldehydes, via a retro-aldol mechanism. This is Serine hydroxymethyltransferase from Chlorobaculum parvum (strain DSM 263 / NCIMB 8327) (Chlorobium vibrioforme subsp. thiosulfatophilum).